Here is a 346-residue protein sequence, read N- to C-terminus: Sensor protein kinase GraS (346 aa).

Helical transmembrane passes span 15–35 (MNWI…SLID) and 43–63 (LFYI…LTYF). Positions 126–332 (EFVHDIKTPV…TVRLIFPLQN (207 aa)) constitute a Histidine kinase domain.

Interacts with GraX.

The protein resides in the cell membrane. It carries out the reaction ATP + protein L-histidine = ADP + protein N-phospho-L-histidine.. In terms of biological role, member of the two-component regulatory system GraR/GraS involved in resistance against cationic antimicrobial peptides (CAMPs). Functions as a sensor protein kinase which phosphorylates GraR through the auxiliary protein GraX. In turn, GraR up-regulates many genes such as adhesins, exoproteins, transporters, toxins, and proteins involved in cell wall synthesis. Down-regulates the expression of many genes involved in RNA and amino acid synthesis or glycolysis. This is Sensor protein kinase GraS (graS) from Staphylococcus aureus (strain MSSA476).